The following is a 467-amino-acid chain: MRANSKAKPVSRAALAGEADPRLVALSVSIQDDGALYAEDIRGSQAHVSMLAAQGIVPKAAARRIVAALDQVRAEFAAGRIRFDPALEDVHTHVERRLGELVGKDAGYLHAGRSRNDQVALDERLFIVGACDRCDAALERLQRAFLGQARAHERTILPGYTHLQRAQPVSLAHHLLAYVEMFGRDRERFAEVRRRAAVSPLGSGALAGTTLPLDREAVAARLGLAGVTHNSLDAVSDRDSAAELLFACALAAVHLSRIGEELVLWTTKEFGFATLSDAFATGSSLMPQKKNPDVGELARGRAGRALGDLVALLAILKGLPLSYNRDLQEDKRPLLGGPEALVLTADAVAGAVGTATFHAERMEEALGSGEALATDAAEYLVERGVPFREAHEAVGKAAAFSAREGRPMARLTAAEWASFHRRFEKDVLRCFDARRSLKRRELPGAPGPRAVRAELRRWEKALGKARR.

The protein belongs to the lyase 1 family. Argininosuccinate lyase subfamily.

The protein resides in the cytoplasm. It carries out the reaction 2-(N(omega)-L-arginino)succinate = fumarate + L-arginine. It functions in the pathway amino-acid biosynthesis; L-arginine biosynthesis; L-arginine from L-ornithine and carbamoyl phosphate: step 3/3. This is Argininosuccinate lyase from Anaeromyxobacter dehalogenans (strain 2CP-C).